The chain runs to 834 residues: MAVKKNKEDNSEERQYSTLTKDILKRVDHISIENELRESYLTYAMSVIVSRALPDVRDGLKPVHRRILYAMYDANLTHDKPYKKSAATVGEVLARYHPHGDAAVYGTMVRMAQDFSMRYLLVDGQGNFGSIDDDPPAAMRYTEARMTRFAEEMLNDIEKETVKFVPNFDDSRTEPSVLPATVPQLLVNGSMGIAIGMATNMPPHNLKEVVNAIVYYIDHQDAEIKDLMRYVQGPDFPTAGIIYGKEGIKEAYTTGKGRIKLRARLEVEETKRDREAIVVKELPYGVVKTTLHEKIADLVKQGKIEGVADIRDESSNRAGIRLIIELKKGVATQIVLNQLWKHTDLETTFGIINLALVNGEPKVLNLKELIKYFVDHRVEVITKRTEYDLNQAKAKAHILEGLLIAQANIEEVIRIIRESENTDAARTTLMNRFKLSEKQAQAILDMPLKRLTALEKLKIEQELQQLREFIAYCEDLLAHPEKILAVIKDELKKISEKYGDDRRSEIIGKTNDTEIDEEDLIHDEDVAVSITTQGFIKRVPASSYRTQGRGGVGVQGGKSQGEHYIEHLFVASTKDYLFIFTDRGKAFWMKVHEIPALSKISQGKSIKFILNLAPEEKITSYFTVSEFDPKQSIIMVTKMGTIKKMELKHLENAKKRGILALTLENNDELVAVSPVQTGDDFIMTTAAGLALRITEEKIRKMGRAAAGVKGISLDDDDICVSGNAIHKGESLIVITENGIGKRLSSKQFNVKGRGGKGQIYIKPDNKTGNVVSVKTVGDKDEIMVVTTDDMTIKIKADSIPELGRNAKGVKIVNISDGARVSDLAVVPADNEEKK.

The Topo IIA-type catalytic domain maps to Leu-53–Leu-520. Tyr-141 (O-(5'-phospho-DNA)-tyrosine intermediate) is an active-site residue. A GyrA-box motif is present at residues Gln-547–Gly-553.

Belongs to the type II topoisomerase GyrA/ParC subunit family. Heterotetramer, composed of two GyrA and two GyrB chains. In the heterotetramer, GyrA contains the active site tyrosine that forms a transient covalent intermediate with DNA, while GyrB binds cofactors and catalyzes ATP hydrolysis.

The protein localises to the cytoplasm. The enzyme catalyses ATP-dependent breakage, passage and rejoining of double-stranded DNA.. A type II topoisomerase that negatively supercoils closed circular double-stranded (ds) DNA in an ATP-dependent manner to modulate DNA topology and maintain chromosomes in an underwound state. Negative supercoiling favors strand separation, and DNA replication, transcription, recombination and repair, all of which involve strand separation. Also able to catalyze the interconversion of other topological isomers of dsDNA rings, including catenanes and knotted rings. Type II topoisomerases break and join 2 DNA strands simultaneously in an ATP-dependent manner. The chain is DNA gyrase subunit A from Brachyspira hyodysenteriae (strain ATCC 49526 / WA1).